A 469-amino-acid polypeptide reads, in one-letter code: Interstitial collagenase (469 aa).

The signal sequence occupies residues 1–19 (MHSFPPLLLLLFWGVVSHS). The propeptide at 20 to 99 (FPATLETQEQ…PRCGVPDVAQ (80 aa)) is activation peptide. S57 is subject to Phosphoserine. Residues 90-97 (PRCGVPDV) carry the Cysteine switch motif. Residue C92 participates in Zn(2+) binding. Residues 98–276 (AQFVLTEGNP…VQPIGPQTPK (179 aa)) are metalloprotease. Residue N120 is glycosylated (N-linked (GlcNAc...) asparagine). Residues D124 and D158 each contribute to the Ca(2+) site. Residues H168 and D170 each contribute to the Zn(2+) site. Positions 175, 176, 178, and 180 each coordinate Ca(2+). H183 contributes to the Zn(2+) binding site. The Ca(2+) site is built by G190, G192, and D194. H196 provides a ligand contact to Zn(2+). Positions 198, 199, and 201 each coordinate Ca(2+). H218 lines the Zn(2+) pocket. E219 is a catalytic residue. Positions 222 and 228 each coordinate Zn(2+). T274 is modified (phosphothreonine). Hemopexin repeat units follow at residues 275–324 (PKAC…WPQL), 325–371 (PNGL…FGFP), 374–422 (VKHI…FPGI), and 423–466 (GHKV…WFNC). C278 and C466 are disulfide-bonded. Ca(2+) contacts are provided by D285 and E329. The residue at position 360 (Y360) is a Phosphotyrosine; by PKDCC. Ca(2+) contacts are provided by D378 and D427.

Belongs to the peptidase M10A family. As to quaternary structure, (Microbial infection) Interacts with HIV-1 Tat. Ca(2+) is required as a cofactor. It depends on Zn(2+) as a cofactor. In terms of processing, undergoes autolytic cleavage to two major forms (22 kDa and 27 kDa). A minor form (25 kDa) is the glycosylated form of the 22 kDa form. The 27 kDa form has no activity while the 22/25 kDa form can act as activator for collagenase. Post-translationally, tyrosine phosphorylated in platelets by PKDCC/VLK.

It localises to the secreted. The protein localises to the extracellular space. Its subcellular location is the extracellular matrix. The catalysed reaction is Cleavage of the triple helix of collagen at about three-quarters of the length of the molecule from the N-terminus, at 775-Gly-|-Ile-776 in the alpha1(I) chain. Cleaves synthetic substrates and alpha-macroglobulins at bonds where P1' is a hydrophobic residue.. With respect to regulation, can be activated without removal of the activation peptide. Functionally, cleaves collagens of types I, II, and III at one site in the helical domain. Also cleaves collagens of types VII and X. In case of HIV infection, interacts and cleaves the secreted viral Tat protein, leading to a decrease in neuronal Tat's mediated neurotoxicity. The chain is Interstitial collagenase (MMP1) from Homo sapiens (Human).